The following is a 31-amino-acid chain: Cytochrome b6-f complex subunit 6 (31 aa).

Residues 4 to 26 (ITSYFGFLLAASTITPALFIGLS) form a helical membrane-spanning segment.

The protein belongs to the PetL family. As to quaternary structure, the 4 large subunits of the cytochrome b6-f complex are cytochrome b6, subunit IV (17 kDa polypeptide, PetD), cytochrome f and the Rieske protein, while the 4 small subunits are PetG, PetL, PetM and PetN. The complex functions as a dimer.

The protein resides in the plastid. Its subcellular location is the chloroplast thylakoid membrane. Its function is as follows. Component of the cytochrome b6-f complex, which mediates electron transfer between photosystem II (PSII) and photosystem I (PSI), cyclic electron flow around PSI, and state transitions. PetL is important for photoautotrophic growth as well as for electron transfer efficiency and stability of the cytochrome b6-f complex. This is Cytochrome b6-f complex subunit 6 from Buxus microphylla (Littleleaf boxwood).